The chain runs to 256 residues: Enolase-phosphatase E1 (256 aa).

Mg(2+) contacts are provided by Asp-14 and Glu-16. Substrate-binding positions include 142 to 143 and Lys-176; that span reads SS. Asp-201 serves as a coordination point for Mg(2+).

The protein belongs to the HAD-like hydrolase superfamily. MasA/MtnC family. Monomer. Mg(2+) serves as cofactor.

It localises to the cytoplasm. It is found in the nucleus. It carries out the reaction 5-methylsulfanyl-2,3-dioxopentyl phosphate + H2O = 1,2-dihydroxy-5-(methylsulfanyl)pent-1-en-3-one + phosphate. Its pathway is amino-acid biosynthesis; L-methionine biosynthesis via salvage pathway; L-methionine from S-methyl-5-thio-alpha-D-ribose 1-phosphate: step 3/6. It functions in the pathway amino-acid biosynthesis; L-methionine biosynthesis via salvage pathway; L-methionine from S-methyl-5-thio-alpha-D-ribose 1-phosphate: step 4/6. In terms of biological role, bifunctional enzyme that catalyzes the enolization of 2,3-diketo-5-methylthiopentyl-1-phosphate (DK-MTP-1-P) into the intermediate 2-hydroxy-3-keto-5-methylthiopentenyl-1-phosphate (HK-MTPenyl-1-P), which is then dephosphorylated to form the acireductone 1,2-dihydroxy-3-keto-5-methylthiopentene (DHK-MTPene). In Drosophila erecta (Fruit fly), this protein is Enolase-phosphatase E1.